The sequence spans 478 residues: Cytochrome c lysine N-methyltransferase 1 (478 aa).

One can recognise an SET domain in the interval 32-284 (PCVSIERSQI…DRFEVFISYC (253 aa)). Residues 199–299 (TRAVVLRVYA…VHFKHTYGFF (101 aa)) form an SET-like region.

The protein belongs to the class V-like SAM-binding methyltransferase superfamily.

The protein resides in the cytoplasm. The protein localises to the cytosol. The catalysed reaction is L-lysyl-[cytochrome c] + S-adenosyl-L-methionine = N(6)-methyl-L-lysyl-[cytochrome c] + S-adenosyl-L-homocysteine + H(+). Functionally, methyltransferase which mediates trimethylation of cytochrome c (CYC1). The sequence is that of Cytochrome c lysine N-methyltransferase 1 (CTM1) from Eremothecium gossypii (strain ATCC 10895 / CBS 109.51 / FGSC 9923 / NRRL Y-1056) (Yeast).